Consider the following 255-residue polypeptide: Type III pantothenate kinase (255 aa).

Residue 6–13 (DVGNSYTM) coordinates ATP. Residue 107–110 (GADR) participates in substrate binding. The Proton acceptor role is filled by Asp109. Asp129 serves as a coordination point for K(+). Thr132 is an ATP binding site. Thr183 lines the substrate pocket.

This sequence belongs to the type III pantothenate kinase family. As to quaternary structure, homodimer. It depends on NH4(+) as a cofactor. The cofactor is K(+).

It is found in the cytoplasm. The catalysed reaction is (R)-pantothenate + ATP = (R)-4'-phosphopantothenate + ADP + H(+). It functions in the pathway cofactor biosynthesis; coenzyme A biosynthesis; CoA from (R)-pantothenate: step 1/5. Its function is as follows. Catalyzes the phosphorylation of pantothenate (Pan), the first step in CoA biosynthesis. This is Type III pantothenate kinase from Petrotoga mobilis (strain DSM 10674 / SJ95).